The primary structure comprises 295 residues: Secreted frizzled-related protein 2 (295 aa).

The first 24 residues, Met1–Gly24, serve as a signal peptide directing secretion. Residues Tyr35–Leu155 enclose the FZ domain. Disulfide bonds link Cys40–Cys103, Cys50–Cys96, Cys87–Cys125, Cys114–Cys152, Cys118–Cys142, Cys172–Cys245, Cys175–Cys247, and Cys190–Cys295. Residues Cys172 to Cys295 enclose the NTR domain.

The protein belongs to the secreted frizzled-related protein (sFRP) family. In terms of tissue distribution, expressed in adipose tissue, heart, brain, skeletal muscle, pancreas, thymus, prostate, testis, ovary, small intestine and colon. Highest levels in adipose tissue, small intestine and colon.

The protein localises to the secreted. Soluble frizzled-related proteins (sFRPS) function as modulators of Wnt signaling through direct interaction with Wnts. They have a role in regulating cell growth and differentiation in specific cell types. SFRP2 may be important for eye retinal development and for myogenesis. This is Secreted frizzled-related protein 2 (SFRP2) from Homo sapiens (Human).